Reading from the N-terminus, the 156-residue chain is Small ribosomal subunit protein uS7 (156 aa).

It belongs to the universal ribosomal protein uS7 family. As to quaternary structure, part of the 30S ribosomal subunit. Contacts proteins S9 and S11.

One of the primary rRNA binding proteins, it binds directly to 16S rRNA where it nucleates assembly of the head domain of the 30S subunit. Is located at the subunit interface close to the decoding center, probably blocks exit of the E-site tRNA. The protein is Small ribosomal subunit protein uS7 of Frankia alni (strain DSM 45986 / CECT 9034 / ACN14a).